The sequence spans 477 residues: Aspartyl/glutamyl-tRNA(Asn/Gln) amidotransferase subunit B (477 aa).

It belongs to the GatB/GatE family. GatB subfamily. Heterotrimer of A, B and C subunits.

The catalysed reaction is L-glutamyl-tRNA(Gln) + L-glutamine + ATP + H2O = L-glutaminyl-tRNA(Gln) + L-glutamate + ADP + phosphate + H(+). It catalyses the reaction L-aspartyl-tRNA(Asn) + L-glutamine + ATP + H2O = L-asparaginyl-tRNA(Asn) + L-glutamate + ADP + phosphate + 2 H(+). In terms of biological role, allows the formation of correctly charged Asn-tRNA(Asn) or Gln-tRNA(Gln) through the transamidation of misacylated Asp-tRNA(Asn) or Glu-tRNA(Gln) in organisms which lack either or both of asparaginyl-tRNA or glutaminyl-tRNA synthetases. The reaction takes place in the presence of glutamine and ATP through an activated phospho-Asp-tRNA(Asn) or phospho-Glu-tRNA(Gln). The sequence is that of Aspartyl/glutamyl-tRNA(Asn/Gln) amidotransferase subunit B from Clostridium tetani (strain Massachusetts / E88).